Here is a 700-residue protein sequence, read N- to C-terminus: Elongation factor G (700 aa).

Residues 10-286 enclose the tr-type G domain; sequence NKVRNIGIMA…AVIDYLPNPL (277 aa). GTP-binding positions include 19-26, 83-87, and 137-140; these read AHIDAGKT, DTPGH, and NKMD.

Belongs to the TRAFAC class translation factor GTPase superfamily. Classic translation factor GTPase family. EF-G/EF-2 subfamily.

The protein localises to the cytoplasm. Catalyzes the GTP-dependent ribosomal translocation step during translation elongation. During this step, the ribosome changes from the pre-translocational (PRE) to the post-translocational (POST) state as the newly formed A-site-bound peptidyl-tRNA and P-site-bound deacylated tRNA move to the P and E sites, respectively. Catalyzes the coordinated movement of the two tRNA molecules, the mRNA and conformational changes in the ribosome. This is Elongation factor G from Rhodococcus opacus (strain B4).